Reading from the N-terminus, the 89-residue chain is Small ribosomal subunit protein uS14A (89 aa).

This sequence belongs to the universal ribosomal protein uS14 family. Part of the 30S ribosomal subunit. Contacts proteins S3 and S10.

Binds 16S rRNA, required for the assembly of 30S particles and may also be responsible for determining the conformation of the 16S rRNA at the A site. The polypeptide is Small ribosomal subunit protein uS14A (Staphylococcus saprophyticus subsp. saprophyticus (strain ATCC 15305 / DSM 20229 / NCIMB 8711 / NCTC 7292 / S-41)).